We begin with the raw amino-acid sequence, 266 residues long: Inositol-1-monophosphatase (266 aa).

Positions 69, 86, 88, and 89 each coordinate Mg(2+). Glutamate 69 lines the substrate pocket. Substrate is bound by residues 88-91 (LDGT), arginine 185, and aspartate 214. A Mg(2+)-binding site is contributed by aspartate 214.

It belongs to the inositol monophosphatase superfamily. Requires Mg(2+) as cofactor.

The catalysed reaction is a myo-inositol phosphate + H2O = myo-inositol + phosphate. The chain is Inositol-1-monophosphatase (suhB) from Mesorhizobium japonicum (strain LMG 29417 / CECT 9101 / MAFF 303099) (Mesorhizobium loti (strain MAFF 303099)).